The chain runs to 163 residues: Nucleotide-binding protein Asuc_2113 (163 aa).

This sequence belongs to the YajQ family.

Nucleotide-binding protein. In Actinobacillus succinogenes (strain ATCC 55618 / DSM 22257 / CCUG 43843 / 130Z), this protein is Nucleotide-binding protein Asuc_2113.